Reading from the N-terminus, the 187-residue chain is Acireductone dioxygenase (187 aa).

Fe(2+)-binding residues include His-87, His-89, Glu-93, and His-136. Positions 87, 89, 93, and 136 each coordinate Ni(2+).

It belongs to the acireductone dioxygenase (ARD) family. Fe(2+) serves as cofactor. Ni(2+) is required as a cofactor.

The protein localises to the cytoplasm. The protein resides in the nucleus. It carries out the reaction 1,2-dihydroxy-5-(methylsulfanyl)pent-1-en-3-one + O2 = 4-methylsulfanyl-2-oxobutanoate + formate + 2 H(+). The enzyme catalyses 1,2-dihydroxy-5-(methylsulfanyl)pent-1-en-3-one + O2 = 3-(methylsulfanyl)propanoate + CO + formate + 2 H(+). Its pathway is amino-acid biosynthesis; L-methionine biosynthesis via salvage pathway; L-methionine from S-methyl-5-thio-alpha-D-ribose 1-phosphate: step 5/6. Its function is as follows. Catalyzes 2 different reactions between oxygen and the acireductone 1,2-dihydroxy-3-keto-5-methylthiopentene (DHK-MTPene) depending upon the metal bound in the active site. Fe-containing acireductone dioxygenase (Fe-ARD) produces formate and 2-keto-4-methylthiobutyrate (KMTB), the alpha-ketoacid precursor of methionine in the methionine recycle pathway. Ni-containing acireductone dioxygenase (Ni-ARD) produces methylthiopropionate, carbon monoxide and formate, and does not lie on the methionine recycle pathway. The chain is Acireductone dioxygenase from Cryptococcus neoformans var. neoformans serotype D (strain JEC21 / ATCC MYA-565) (Filobasidiella neoformans).